Here is a 327-residue protein sequence, read N- to C-terminus: Phenylalanine--tRNA ligase alpha subunit (327 aa).

Residue Glu252 coordinates Mg(2+).

The protein belongs to the class-II aminoacyl-tRNA synthetase family. Phe-tRNA synthetase alpha subunit type 1 subfamily. In terms of assembly, tetramer of two alpha and two beta subunits. The cofactor is Mg(2+).

It localises to the cytoplasm. It catalyses the reaction tRNA(Phe) + L-phenylalanine + ATP = L-phenylalanyl-tRNA(Phe) + AMP + diphosphate + H(+). In Shigella boydii serotype 18 (strain CDC 3083-94 / BS512), this protein is Phenylalanine--tRNA ligase alpha subunit.